Reading from the N-terminus, the 306-residue chain is Secretory carrier-associated membrane protein 1 (306 aa).

Positions 1–66 (MAGRYDSNPF…LPPEPAAFGA (66 aa)) are disordered. Topologically, residues 1 to 141 (MAGRYDSNPF…EIPSHLQRMQ (141 aa)) are cytoplasmic. The segment covering 25 to 36 (KAGGQPSYGGGA) has biased composition (gly residues). Residues 40–55 (PNPRNVPSVSSNSRLS) are compositionally biased toward low complexity. Residues 72–109 (LDSSKDLKNREKELQAREAELNKREKELKRREEAAARA) adopt a coiled-coil conformation. 4 consecutive transmembrane segments (helical) span residues 142 to 162 (YVAF…VIAV), 174 to 194 (IWLL…VLWY), 209 to 229 (FGLF…SAVA), and 257 to 277 (IFYF…IWVI). Residues 278 to 306 (QQVYMYFRGSGKAAEMKRDATRGAMRAAF) are Cytoplasmic-facing.

This sequence belongs to the SCAMP family.

It localises to the cell membrane. The protein localises to the cytoplasmic vesicle. It is found in the secretory vesicle membrane. Probably involved in membrane trafficking. This is Secretory carrier-associated membrane protein 1 (SCAMP1) from Oryza sativa subsp. japonica (Rice).